A 151-amino-acid chain; its full sequence is Large ribosomal subunit protein bL9 (151 aa).

Belongs to the bacterial ribosomal protein bL9 family.

Functionally, binds to the 23S rRNA. The chain is Large ribosomal subunit protein bL9 from Desulfotalea psychrophila (strain LSv54 / DSM 12343).